The chain runs to 520 residues: Putative cytochrome P450 CYP13A4 (520 aa).

C464 lines the heme pocket.

This sequence belongs to the cytochrome P450 family. Heme is required as a cofactor.

Its function is as follows. Cytochromes P450 are a group of heme-thiolate monooxygenases. They oxidize a variety of structurally unrelated compounds, including steroids, fatty acids, and xenobiotics. The sequence is that of Putative cytochrome P450 CYP13A4 (cyp-13A4) from Caenorhabditis elegans.